A 331-amino-acid polypeptide reads, in one-letter code: Ribosomal RNA small subunit methyltransferase H (331 aa).

S-adenosyl-L-methionine-binding positions include Gly-38 to Tyr-40, Asp-56, Phe-83, Asp-100, and Gln-107. The interval Asp-287–Arg-331 is disordered.

Belongs to the methyltransferase superfamily. RsmH family.

The protein resides in the cytoplasm. It catalyses the reaction cytidine(1402) in 16S rRNA + S-adenosyl-L-methionine = N(4)-methylcytidine(1402) in 16S rRNA + S-adenosyl-L-homocysteine + H(+). In terms of biological role, specifically methylates the N4 position of cytidine in position 1402 (C1402) of 16S rRNA. The polypeptide is Ribosomal RNA small subunit methyltransferase H (Cereibacter sphaeroides (strain ATCC 17023 / DSM 158 / JCM 6121 / CCUG 31486 / LMG 2827 / NBRC 12203 / NCIMB 8253 / ATH 2.4.1.) (Rhodobacter sphaeroides)).